A 407-amino-acid chain; its full sequence is MAAAALRFPVQGTVTFEDVAVKFTQEEWNLLSEAQRCLYRDVTLENLALMSSLGCWCGVEDEAAPSKQSIYIQRETQVRTPMAGVSPKKAHPCEMCGPILGDILHVADHQGTHHKQKLHRCEAWGNKLYDSGNFHQHQNEHIGEKPYRGSVEEALFAKRCKLHVSGESSVFSESGKDFLLRSGLLQQEATHTGKSNSKTECVSLFHGGKSHYSCGGCMKHFSTKDILSQHERLLPTEEPSVWCECGKSSSKYDSFSNHQGVHTREKPYTCGICGKLFNSKSHLLVHQRIHTGEKPYECEVCQKFFRHKYHLIAHQRVHTGERPYECSDCGKSFTHSSTFRVHKRVHTGQKPYECSECGKSFAESSSLTKHRRVHTGEKPYGCSECEKKFRQISSLRHHQRVHKRKGL.

Residues valine 14–alanine 90 enclose the KRAB domain. The C2H2-type 1 zinc-finger motif lies at histidine 91–histidine 113. Residues histidine 119–histidine 141 form a C2H2-type 2; degenerate zinc finger. Glycyl lysine isopeptide (Lys-Gly) (interchain with G-Cter in SUMO2) cross-links involve residues lysine 176 and lysine 198. The C2H2-type 3; degenerate zinc finger occupies tyrosine 212–leucine 234. The C2H2-type 4; degenerate zinc finger occupies glutamate 244–histidine 262. Glycyl lysine isopeptide (Lys-Gly) (interchain with G-Cter in SUMO2) cross-links involve residues lysine 251 and lysine 266. 5 C2H2-type zinc fingers span residues tyrosine 268–histidine 290, tyrosine 296–histidine 318, tyrosine 324–histidine 346, tyrosine 352–histidine 374, and tyrosine 380–histidine 402. Lysine 308 participates in a covalent cross-link: Glycyl lysine isopeptide (Lys-Gly) (interchain with G-Cter in SUMO2).

It belongs to the krueppel C2H2-type zinc-finger protein family.

Its subcellular location is the nucleus. Its function is as follows. May be involved in transcriptional regulation. The polypeptide is Zinc finger protein 552 (ZNF552) (Homo sapiens (Human)).